The primary structure comprises 299 residues: ATP synthase gamma chain (299 aa).

It belongs to the ATPase gamma chain family. In terms of assembly, F-type ATPases have 2 components, CF(1) - the catalytic core - and CF(0) - the membrane proton channel. CF(1) has five subunits: alpha(3), beta(3), gamma(1), delta(1), epsilon(1). CF(0) has three main subunits: a, b and c.

The protein resides in the cell membrane. In terms of biological role, produces ATP from ADP in the presence of a proton gradient across the membrane. The gamma chain is believed to be important in regulating ATPase activity and the flow of protons through the CF(0) complex. The polypeptide is ATP synthase gamma chain (Leifsonia xyli subsp. xyli (strain CTCB07)).